The primary structure comprises 800 residues: Phenylalanine--tRNA ligase beta subunit (800 aa).

In terms of domain architecture, tRNA-binding spans 38–147; it reads GAELKGVVAA…PGTVPGTPIG (110 aa). Positions 401–477 constitute a B5 domain; the sequence is VASPEVRMRW…RTLGYDAIPE (77 aa). Asp-455, Asp-461, Glu-464, and Glu-465 together coordinate Mg(2+). In terms of domain architecture, FDX-ACB spans 708–799; the sequence is PRLPAVLRDV…LRERVGAELR (92 aa).

This sequence belongs to the phenylalanyl-tRNA synthetase beta subunit family. Type 1 subfamily. Tetramer of two alpha and two beta subunits. It depends on Mg(2+) as a cofactor.

The protein resides in the cytoplasm. It catalyses the reaction tRNA(Phe) + L-phenylalanine + ATP = L-phenylalanyl-tRNA(Phe) + AMP + diphosphate + H(+). The protein is Phenylalanine--tRNA ligase beta subunit of Anaeromyxobacter dehalogenans (strain 2CP-C).